Consider the following 342-residue polypeptide: Palmitoyltransferase PFA4 (342 aa).

Residues 1–8 lie on the Cytoplasmic side of the membrane; sequence MITFSNPW. The helical transmembrane segment at 9–29 threads the bilayer; it reads IGVIIPCIIIFTLSTFSAIYI. Topologically, residues 30–38 are lumenal; it reads LPHHVSNNE. Residues 39 to 59 traverse the membrane as a helical segment; sequence LTLFICASAMVWISYIIAIIV. Topologically, residues 60–124 are cytoplasmic; the sequence is PPGSPPKNYT…GHRNMPHFMR (65 aa). Residues 77–127 form the DHHC domain; the sequence is MYCLKCKAYKPERTHHSKALGVCVLKMDHHCPWTNNTVGHRNMPHFMRFLV. Catalysis depends on Cys-107, which acts as the S-palmitoyl cysteine intermediate. The helical transmembrane segment at 125–145 threads the bilayer; that stretch reads FLVWVDMTVGYLFIRLCIRIM. Topologically, residues 146–162 are lumenal; it reads KLWRDKHLPSYLFDKTE. Residues 163–183 traverse the membrane as a helical segment; that stretch reads VILSIVFLPASFFVLFTVGIL. Residues 184–342 lie on the Cytoplasmic side of the membrane; the sequence is TIRVFVNMCN…ADFGVEHTDI (159 aa).

It belongs to the DHHC palmitoyltransferase family. PFA4 subfamily.

It is found in the endoplasmic reticulum membrane. The catalysed reaction is L-cysteinyl-[protein] + hexadecanoyl-CoA = S-hexadecanoyl-L-cysteinyl-[protein] + CoA. In terms of biological role, mediates the reversible addition of palmitate to target proteins, thereby regulating their membrane association and biological function. The polypeptide is Palmitoyltransferase PFA4 (Yarrowia lipolytica (strain CLIB 122 / E 150) (Yeast)).